Here is a 138-residue protein sequence, read N- to C-terminus: Protein Turandot B (138 aa).

The first 21 residues, 1-21, serve as a signal peptide directing secretion; it reads MNFKTSLICFALLLIGTLCSA.

This sequence belongs to the Turandot family.

It is found in the secreted. In terms of biological role, a humoral factor that may play a role in stress tolerance. This chain is Protein Turandot B, found in Drosophila melanogaster (Fruit fly).